A 990-amino-acid chain; its full sequence is Nucleotide-binding leucine-rich repeat (NLR)-like protein (990 aa).

Residues 22–304 (GWICAIPTEL…AVAAAYAKIL (283 aa)) are purine nucleoside phosphorylase domain. The NB-ARC domain maps to 334–563 (REEHLRQVLT…TISNYLEVYE (230 aa)). TPR repeat units lie at residues 732–765 (RDLLHNIGEYYYRTGKYREAEEFYWRALELKKLA), 774–807 (IGSMNNLAVVYERHGEYAKAESLQRQTLELMKQV), 816–849 (LGSMNNLALVYEQQGEYAEAEKLQQQTLELRKQA), 858–891 (LMSMNNLATIYEQQGEYAKAESLQRQTLELKQQT), 900–933 (LASMNNLALVYEHQGEYAKAETLYQQTLKLRKQV), and 942–975 (LQSMNNLAIVYRLQGKYIEAEGLQQQQQSQATLD). The tract at residues 965 to 990 (QQQQQSQATLDEGRLSKPARKRRKKK) is disordered. Residues 981 to 990 (KPARKRRKKK) are compositionally biased toward basic residues.

It carries out the reaction ATP + H2O = D-ribose 5-triphosphate + adenine. The catalysed reaction is dATP + H2O = 2-deoxyribose 5-triphosphate + adenine. Functionally, the N-terminal purine nucleoside phosphorylase (PNP) domain cleaves the N-glycosidic bond of ATP, and to a lesser extent dATP; has very weak activity on adenosine and deoxyadenosine and no activity on (d)ADP or (d)AMP. The chain is Nucleotide-binding leucine-rich repeat (NLR)-like protein from Hyaloscypha variabilis (strain UAMH 11265 / GT02V1 / F) (Meliniomyces variabilis).